The primary structure comprises 450 residues: Tubulin beta-6 chain (450 aa).

Gln-11, Glu-71, Ser-140, Gly-144, Thr-145, Gly-146, Asn-206, and Asn-228 together coordinate GTP. Glu-71 is a Mg(2+) binding site. The disordered stretch occupies residues 429 to 450 (DATVEDEEEYEGEEGLDENYET). Positions 431–450 (TVEDEEEYEGEEGLDENYET) are enriched in acidic residues.

The protein belongs to the tubulin family. Dimer of alpha and beta chains. A typical microtubule is a hollow water-filled tube with an outer diameter of 25 nm and an inner diameter of 15 nM. Alpha-beta heterodimers associate head-to-tail to form protofilaments running lengthwise along the microtubule wall with the beta-tubulin subunit facing the microtubule plus end conferring a structural polarity. Microtubules usually have 13 protofilaments but different protofilament numbers can be found in some organisms and specialized cells. Mg(2+) serves as cofactor.

It localises to the cytoplasm. It is found in the cytoskeleton. Its function is as follows. Tubulin is the major constituent of microtubules, a cylinder consisting of laterally associated linear protofilaments composed of alpha- and beta-tubulin heterodimers. Microtubules grow by the addition of GTP-tubulin dimers to the microtubule end, where a stabilizing cap forms. Below the cap, tubulin dimers are in GDP-bound state, owing to GTPase activity of alpha-tubulin. The chain is Tubulin beta-6 chain from Gossypium hirsutum (Upland cotton).